Here is a 403-residue protein sequence, read N- to C-terminus: Serine/threonine-protein phosphatase 4 regulatory subunit 2-A (403 aa).

Polar residues-rich tracts occupy residues 140 to 149, 156 to 170, and 183 to 196; these read EKNNSTSLNR, PSNS…NVNG, and SLSS…LPDS. Residues 140-403 form a disordered region; that stretch reads EKNNSTSLNR…DAPEEPMEQD (264 aa). Residues 197–211 are compositionally biased toward basic and acidic residues; that stretch reads TENKESDLQQKEKSQ. 2 stretches are compositionally biased toward polar residues: residues 212–226 and 371–387; these read SDSA…ATTS and ATSS…SPME. The segment covering 388–403 has biased composition (acidic residues); sequence NSEEATDAPEEPMEQD.

Belongs to the PPP4R2 family. Serine/threonine-protein phosphatase 4 (PP4) occurs in different assemblies of the catalytic and one or more regulatory subunits.

Its function is as follows. Regulatory subunit of serine/threonine-protein phosphatase 4 (PP4). This chain is Serine/threonine-protein phosphatase 4 regulatory subunit 2-A (ppp4r2-a), found in Xenopus laevis (African clawed frog).